Reading from the N-terminus, the 380-residue chain is MYLKTLHLSAFRNYREQQIEFDHQKTILLGNNAQGKSNVLEAVELLATLKSHRTNRDRDFILEGETIGQITAKIERNYGTSDLAITLRSPGRRTLTLNHEHLRRHLEFLGSLNAVQFSSLDLDLVRGSPDARRNWLDTLLVQLEPIYAHILQQYYQVLRQRNALLKDLRKTATEEGKSDHLSAQMTQLHLWDQQLAETGSRVTRRRARVIERLIPLAQIWHQNISGGQEILQIDYLPNVSWQEDEPLEVQQAFLAKIEQRRLAEQQLGTTVVGPHRDDVEFTINGTPAKSYGSQGQQRTLVLALKLAELKLIEEVIGEPPLLLLDDVLAELDPNRQNQLLEVIQGRFQTFITTTYLHSFDAQWLQSSQILKVEAGKIHPC.

An ATP-binding site is contributed by 30–37 (GNNAQGKS).

It belongs to the RecF family.

The protein localises to the cytoplasm. In terms of biological role, the RecF protein is involved in DNA metabolism; it is required for DNA replication and normal SOS inducibility. RecF binds preferentially to single-stranded, linear DNA. It also seems to bind ATP. The protein is DNA replication and repair protein RecF of Rippkaea orientalis (strain PCC 8801 / RF-1) (Cyanothece sp. (strain PCC 8801)).